Here is a 929-residue protein sequence, read N- to C-terminus: Alanine--tRNA ligase (929 aa).

Zn(2+)-binding residues include histidine 619, histidine 623, cysteine 722, and histidine 726.

This sequence belongs to the class-II aminoacyl-tRNA synthetase family. The cofactor is Zn(2+).

The protein localises to the cytoplasm. It catalyses the reaction tRNA(Ala) + L-alanine + ATP = L-alanyl-tRNA(Ala) + AMP + diphosphate. In terms of biological role, catalyzes the attachment of alanine to tRNA(Ala) in a two-step reaction: alanine is first activated by ATP to form Ala-AMP and then transferred to the acceptor end of tRNA(Ala). Also edits incorrectly charged Ser-tRNA(Ala) and Gly-tRNA(Ala) via its editing domain. The chain is Alanine--tRNA ligase from Halobacterium salinarum (strain ATCC 29341 / DSM 671 / R1).